Reading from the N-terminus, the 91-residue chain is MTQQSNTERKPRAKGPKRPRKPKVDPFSIGELEITDYKDVKMLRRFISDTGKILPRRRTGLSAKHQRRISQTIKIARQLALLPYTEKLVRK.

The disordered stretch occupies residues 1-27 (MTQQSNTERKPRAKGPKRPRKPKVDPF). The segment covering 11 to 21 (PRAKGPKRPRK) has biased composition (basic residues).

Belongs to the bacterial ribosomal protein bS18 family. As to quaternary structure, part of the 30S ribosomal subunit. Forms a tight heterodimer with protein bS6.

Functionally, binds as a heterodimer with protein bS6 to the central domain of the 16S rRNA, where it helps stabilize the platform of the 30S subunit. The polypeptide is Small ribosomal subunit protein bS18 (Deinococcus geothermalis (strain DSM 11300 / CIP 105573 / AG-3a)).